The following is a 370-amino-acid chain: GTPase Obg (370 aa).

Residues 1 to 159 (MKFIDEARIE…RMVRLELKVL (159 aa)) enclose the Obg domain. A disordered region spans residues 127–147 (NLHFKSSTNRAPRQKTDGKPG). One can recognise an OBG-type G domain in the interval 160-334 (ADVGLLGMPN…LCYAVYDYLA (175 aa)). Residues 166 to 173 (GMPNAGKS), 191 to 195 (FTTLA), 213 to 216 (DIPG), 284 to 287 (NKLD), and 315 to 317 (SAL) each bind GTP. Mg(2+) contacts are provided by S173 and T193.

It belongs to the TRAFAC class OBG-HflX-like GTPase superfamily. OBG GTPase family. Monomer. Mg(2+) serves as cofactor.

The protein resides in the cytoplasm. In terms of biological role, an essential GTPase which binds GTP, GDP and possibly (p)ppGpp with moderate affinity, with high nucleotide exchange rates and a fairly low GTP hydrolysis rate. Plays a role in control of the cell cycle, stress response, ribosome biogenesis and in those bacteria that undergo differentiation, in morphogenesis control. The polypeptide is GTPase Obg (Paraburkholderia phymatum (strain DSM 17167 / CIP 108236 / LMG 21445 / STM815) (Burkholderia phymatum)).